A 116-amino-acid chain; its full sequence is Large ribosomal subunit protein bL19 (116 aa).

It belongs to the bacterial ribosomal protein bL19 family.

This protein is located at the 30S-50S ribosomal subunit interface and may play a role in the structure and function of the aminoacyl-tRNA binding site. This Blochmanniella pennsylvanica (strain BPEN) protein is Large ribosomal subunit protein bL19.